We begin with the raw amino-acid sequence, 107 residues long: Circadian clock oscillator protein KaiB (107 aa).

It belongs to the KaiB family. May undergo a major conformational rearrangment; in the free state forms homooligomers. When bound to KaiC switches to a monomeric thioredoxin-fold (KaiB(fs)). The active oscillator complex is probably KaiC(6):KaiB(6).

In terms of biological role, component of the KaiBC clock protein complex, which constitutes the main circadian regulator in cyanobacteria; it may modify the ATPase activity of KaiC. Functionally, does not stimulate dephosphorylation of endogenous KaiC, although it does stimulate dephosphorylation of KiaC from S.elongatus strain PCC 7942. Reduces the ATPase activity of KaiC by about half in vitro, which may be its function in vivo. Its function is as follows. May be a metamorphic protein which reversibly switches between an inactive tetrameric fold and a rare, thioredoxin-like monomeric fold (KaiB(fs)). KaiB(fs) binds phospho-KaiC, and perhaps clock output effectors. The polypeptide is Circadian clock oscillator protein KaiB (Prochlorococcus marinus subsp. pastoris (strain CCMP1986 / NIES-2087 / MED4)).